The sequence spans 149 residues: Large ribosomal subunit protein eL19 (149 aa).

The tract at residues 67–90 (KRKLQKRKGRRRGHGSRKGAKGAR) is disordered.

Belongs to the eukaryotic ribosomal protein eL19 family. As to quaternary structure, part of the 50S ribosomal subunit.

Functionally, binds to the 23S rRNA. The protein is Large ribosomal subunit protein eL19 of Archaeoglobus fulgidus (strain ATCC 49558 / DSM 4304 / JCM 9628 / NBRC 100126 / VC-16).